A 193-amino-acid chain; its full sequence is Acyl carrier protein phosphodiesterase (193 aa).

This sequence belongs to the AcpH family.

It carries out the reaction holo-[ACP] + H2O = apo-[ACP] + (R)-4'-phosphopantetheine + H(+). In terms of biological role, converts holo-ACP to apo-ACP by hydrolytic cleavage of the phosphopantetheine prosthetic group from ACP. This is Acyl carrier protein phosphodiesterase from Escherichia coli O6:H1 (strain CFT073 / ATCC 700928 / UPEC).